The primary structure comprises 248 residues: Adenosylcobinamide-GDP ribazoletransferase (248 aa).

8 consecutive transmembrane segments (helical) span residues 24–44 (EVNL…IGAW), 47–67 (LVFT…AGLF), 70–90 (IIIT…GLFS), 106–126 (VGAN…ALFL), 134–154 (IGWL…LLFA), 165–185 (LGSI…LFVL), 186–206 (FILG…VILF), and 228–248 (AGGQ…WGLI).

Belongs to the CobS family. It depends on Mg(2+) as a cofactor.

It is found in the cell membrane. It catalyses the reaction alpha-ribazole + adenosylcob(III)inamide-GDP = adenosylcob(III)alamin + GMP + H(+). The catalysed reaction is alpha-ribazole 5'-phosphate + adenosylcob(III)inamide-GDP = adenosylcob(III)alamin 5'-phosphate + GMP + H(+). It participates in cofactor biosynthesis; adenosylcobalamin biosynthesis; adenosylcobalamin from cob(II)yrinate a,c-diamide: step 7/7. Its function is as follows. Joins adenosylcobinamide-GDP and alpha-ribazole to generate adenosylcobalamin (Ado-cobalamin). Also synthesizes adenosylcobalamin 5'-phosphate from adenosylcobinamide-GDP and alpha-ribazole 5'-phosphate. This chain is Adenosylcobinamide-GDP ribazoletransferase, found in Listeria welshimeri serovar 6b (strain ATCC 35897 / DSM 20650 / CCUG 15529 / CIP 8149 / NCTC 11857 / SLCC 5334 / V8).